Reading from the N-terminus, the 861-residue chain is Benzylsuccinate synthase alpha subunit (861 aa).

Residues 40–712 (TERTRRLKAR…QAVGLYMEVG (673 aa)) form the PFL domain. The tract at residues 718–744 (TPDGRFGGEAADDGGISPYSGTDKKGP) is disordered. Residues 731–850 (GGISPYSGTD…IIARNEQNFN (120 aa)) form the Glycine radical domain. G825 carries the post-translational modification Glycine radical.

Belongs to the glycyl radical enzyme (GRE) family. BSS subfamily. In terms of assembly, heterohexamer composed of 2 alpha subunits, 2 beta subunits and 2 gamma subunits.

The enzyme catalyses toluene + fumarate = 2-benzylsuccinate. Its pathway is xenobiotic degradation; toluene degradation. Activated by the benzylsuccinate synthase activating enzyme BssD. Rapidly inactivated by oxygen. Its function is as follows. Catalyzes the addition of fumarate to the methyl group of toluene, leading to the formation of benzylsuccinate. This chain is Benzylsuccinate synthase alpha subunit (bssA), found in Thauera aromatica.